A 263-amino-acid chain; its full sequence is Endonuclease 8 (263 aa).

P2 acts as the Schiff-base intermediate with DNA in catalysis. Catalysis depends on E3, which acts as the Proton donor. The Proton donor; for beta-elimination activity role is filled by K53. DNA-binding residues include Q70, R125, and N169. An FPG-type zinc finger spans residues K229 to K263. The active-site Proton donor; for delta-elimination activity is the R253.

It belongs to the FPG family. It depends on Zn(2+) as a cofactor.

It catalyses the reaction 2'-deoxyribonucleotide-(2'-deoxyribose 5'-phosphate)-2'-deoxyribonucleotide-DNA = a 3'-end 2'-deoxyribonucleotide-(2,3-dehydro-2,3-deoxyribose 5'-phosphate)-DNA + a 5'-end 5'-phospho-2'-deoxyribonucleoside-DNA + H(+). Functionally, involved in base excision repair of DNA damaged by oxidation or by mutagenic agents. Acts as a DNA glycosylase that recognizes and removes damaged bases. Has a preference for oxidized pyrimidines, such as thymine glycol, 5,6-dihydrouracil and 5,6-dihydrothymine. Has AP (apurinic/apyrimidinic) lyase activity and introduces nicks in the DNA strand. Cleaves the DNA backbone by beta-delta elimination to generate a single-strand break at the site of the removed base with both 3'- and 5'-phosphates. In Salmonella arizonae (strain ATCC BAA-731 / CDC346-86 / RSK2980), this protein is Endonuclease 8.